The sequence spans 434 residues: Enolase 2 (434 aa).

Glutamine 171 lines the (2R)-2-phosphoglycerate pocket. Glutamate 213 acts as the Proton donor in catalysis. Mg(2+)-binding residues include aspartate 250, glutamate 293, and aspartate 320. (2R)-2-phosphoglycerate-binding residues include lysine 345, arginine 374, serine 375, and lysine 396. Lysine 345 (proton acceptor) is an active-site residue.

Belongs to the enolase family. It depends on Mg(2+) as a cofactor.

The protein resides in the cytoplasm. It localises to the secreted. Its subcellular location is the cell surface. The catalysed reaction is (2R)-2-phosphoglycerate = phosphoenolpyruvate + H2O. It functions in the pathway carbohydrate degradation; glycolysis; pyruvate from D-glyceraldehyde 3-phosphate: step 4/5. Functionally, catalyzes the reversible conversion of 2-phosphoglycerate (2-PG) into phosphoenolpyruvate (PEP). It is essential for the degradation of carbohydrates via glycolysis. This is Enolase 2 from Streptomyces coelicolor (strain ATCC BAA-471 / A3(2) / M145).